Here is a 79-residue protein sequence, read N- to C-terminus: UPF0154 protein lwe1321 (79 aa).

Residues 2-22 (WIYILVGIICLLAGLAGGFFI) form a helical membrane-spanning segment. Residues 57–66 (KINQMMSAMN) show a composition bias toward polar residues. Positions 57–79 (KINQMMSAMNKQQEKEKPKKAKK) are disordered.

This sequence belongs to the UPF0154 family.

Its subcellular location is the cell membrane. This chain is UPF0154 protein lwe1321, found in Listeria welshimeri serovar 6b (strain ATCC 35897 / DSM 20650 / CCUG 15529 / CIP 8149 / NCTC 11857 / SLCC 5334 / V8).